We begin with the raw amino-acid sequence, 296 residues long: Nucleotide-binding protein Rmet_0297 (296 aa).

Position 8 to 15 (8 to 15 (GISGSGKS)) interacts with ATP. 57–60 (DIRS) provides a ligand contact to GTP.

This sequence belongs to the RapZ-like family.

In terms of biological role, displays ATPase and GTPase activities. This is Nucleotide-binding protein Rmet_0297 from Cupriavidus metallidurans (strain ATCC 43123 / DSM 2839 / NBRC 102507 / CH34) (Ralstonia metallidurans).